A 449-amino-acid chain; its full sequence is Probable phosphoglucosamine mutase (449 aa).

The active-site Phosphoserine intermediate is Ser-96. Mg(2+) contacts are provided by Ser-96, Asp-233, Asp-235, and Asp-237. Ser-96 bears the Phosphoserine mark.

The protein belongs to the phosphohexose mutase family. It depends on Mg(2+) as a cofactor. Post-translationally, activated by phosphorylation.

It carries out the reaction alpha-D-glucosamine 1-phosphate = D-glucosamine 6-phosphate. Its function is as follows. Catalyzes the conversion of glucosamine-6-phosphate to glucosamine-1-phosphate. Does not display phosphoglucomutase (PGM) or phosphomannomutase (PMM) activities. This chain is Probable phosphoglucosamine mutase (glmM), found in Thermococcus kodakarensis (strain ATCC BAA-918 / JCM 12380 / KOD1) (Pyrococcus kodakaraensis (strain KOD1)).